Consider the following 78-residue polypeptide: U-scoloptoxin(04)-Er1a (78 aa).

Positions 1–24 are cleaved as a signal peptide; sequence MTRHLIFAAVLLVCLFVCWNAIGA. Positions 25–28 are excised as a propeptide; it reads QDAR.

This sequence belongs to the scoloptoxin-04 family. Post-translationally, contains 2 disulfide bonds. In terms of tissue distribution, expressed by the venom gland.

It is found in the secreted. This is U-scoloptoxin(04)-Er1a from Ethmostigmus rubripes (Giant centipede).